Reading from the N-terminus, the 200-residue chain is Transgelin (200 aa).

An N-acetylserine modification is found at S2. Position 11 is a phosphoserine (S11). Residues P26–A136 form the Calponin-homology (CH) domain. The segment at F144 to Q168 is disordered. Positions L151–P164 are interaction with SH3 domain of ABP1. The span at K154–K165 shows a compositional bias: basic residues.

As to quaternary structure, binds to actin. Interacts with ABP1.

The protein localises to the cytoplasm. Its subcellular location is the cytoskeleton. It is found in the actin patch. Has actin-binding and actin-bundling activity. Stabilizes actin filaments against disassembly. This chain is Transgelin (SCP1), found in Saccharomyces cerevisiae (strain ATCC 204508 / S288c) (Baker's yeast).